A 408-amino-acid polypeptide reads, in one-letter code: Bifunctional polynucleotide phosphatase/kinase (408 aa).

The segment at 1–38 (MSSKKRKSPPQESLTSYFEKSSKSSKKYGSQNKDSDSS) is disordered. S8 bears the Phosphoserine mark. Composition is skewed to polar residues over residues 10–19 (PQESLTSYFE) and 28–38 (YGSQNKDSDSS). 263–270 (GFPSSGKS) contributes to the ATP binding site.

It in the N-terminal section; belongs to the DNA 3' phosphatase family.

It is found in the nucleus. It catalyses the reaction a 3'end (2'-deoxyribonucleotide 3'-phosphate)-DNA + H2O = a 3'-end 2'-deoxyribonucleotide-DNA + phosphate. It carries out the reaction a 5'-end dephospho-2'-deoxyribonucleoside-DNA + ATP = a 5'-end 5'-phospho-2'-deoxyribonucleoside-DNA + ADP + H(+). Functionally, catalyzes the phosphorylation of DNA at 5'-hydroxyl termini and can dephosphorylate its 3'-phosphate termini. Has a role in the repair of breaks in single-stranded DNA. The chain is Bifunctional polynucleotide phosphatase/kinase (pnk1) from Schizosaccharomyces pombe (strain 972 / ATCC 24843) (Fission yeast).